Consider the following 274-residue polypeptide: Proteasome subunit beta type-7-B (274 aa).

Positions 1 to 37 (MSQSSVDIPPKGGFSFDLCKRNDMLTQKGLKAPSFLK) are cleaved as a propeptide — removed in mature form. The active-site Nucleophile is T40.

It belongs to the peptidase T1B family. Component of the 20S core complex of the 26S proteasome. The 26S proteasome is composed of a core protease (CP), known as the 20S proteasome, capped at one or both ends by the 19S regulatory particle (RP/PA700). The 20S proteasome core is composed of 28 subunits that are arranged in four stacked rings, resulting in a barrel-shaped structure. The two end rings are each formed by seven alpha subunits, and the two central rings are each formed by seven beta subunits. The catalytic chamber with the active sites is on the inside of the barrel.

It is found in the cytoplasm. The protein localises to the nucleus. The enzyme catalyses Cleavage of peptide bonds with very broad specificity.. Functionally, the proteasome is a multicatalytic proteinase complex which is characterized by its ability to cleave peptides with Arg, Phe, Tyr, Leu, and Glu adjacent to the leaving group at neutral or slightly basic pH. The proteasome has an ATP-dependent proteolytic activity. The chain is Proteasome subunit beta type-7-B (PBB2) from Arabidopsis thaliana (Mouse-ear cress).